A 187-amino-acid chain; its full sequence is Dirigent protein 6 (187 aa).

An N-terminal signal peptide occupies residues 1-29 (MAFLVEKQLFKALFSFFLLVLLFSDTVLS). The cysteines at positions 40 and 186 are disulfide-linked. N-linked (GlcNAc...) asparagine glycans are attached at residues Asn-59 and Asn-123.

It belongs to the plant dirigent protein family. In terms of assembly, homodimer. In terms of tissue distribution, expressed in roots, cotyledon veins, leaf trichomes, flowers, siliques, and meristems. Present in interfascicular/vascular cambia and developing xylem.

It is found in the secreted. It localises to the extracellular space. Its subcellular location is the apoplast. In terms of biological role, dirigent proteins impart stereoselectivity on the phenoxy radical-coupling reaction, yielding optically active lignans from two molecules of coniferyl alcohol in the biosynthesis of lignans, flavonolignans, and alkaloids and thus plays a central role in plant secondary metabolism. Enantiocomplementary dirigent protein that mediates the laccase-catalyzed enantioselective oxidative phenol coupling of (E)-coniferyl alcohol to (-)-pinoresinol. The protein is Dirigent protein 6 (DIR6) of Arabidopsis thaliana (Mouse-ear cress).